The primary structure comprises 427 residues: O-methyltransferase sol2 (427 aa).

An S-adenosyl-L-methionine-binding site is contributed by Asp281. His327 acts as the Proton acceptor in catalysis.

This sequence belongs to the class I-like SAM-binding methyltransferase superfamily. Cation-independent O-methyltransferase family. COMT subfamily.

It participates in phytotoxin biosynthesis. Functionally, O-methyltransferase; part of the gene cluster that mediates the biosynthesis of the phytotoxin solanapyrone, a causal agent of early blight disease of potato and tomato. The prosolanapyrone synthase sol1 is a polyketide synthase that produces the octaketide desmethylprosolanapyrone I via sequential condensations of 7 malonyl-CoA units with one acetyl-CoA unit, and one methylation step. The octaketide backbone is further methylated by the sol2 O-methyltransferase to yield prosolanapyrone I. Prosolanapyrone I is hydroxylated to prosolanapyrone II by the cytochrome P450 monooxygenase sol6. The solanapyrone synthase sol5 then catalyzes the oxidation of prosolanapyrone II and the subsequent Diels Alder cycloisomerization of the product prosolanapyrone III to solanapyrones A and D. Solanapyrones A and D are then converted into solanapyrones B and E, respectively, by the sol3 dehydrogenase. The chain is O-methyltransferase sol2 (sol2) from Alternaria solani.